Consider the following 992-residue polypeptide: UPF0182 protein MT3285 (992 aa).

7 helical membrane-spanning segments follow: residues 17–39 (RILI…LIDA), 59–81 (LATR…FGGL), 113–135 (LVGI…SYWA), 169–191 (LMLS…AHYI), 212–229 (LVSL…AYWL), 255–277 (VLPA…FSAI), and 284–306 (IPAI…WPLI). A disordered region spans residues 906–938 (PTEAAVPPSPAANPPPPASGPQPPPVTAAPPVP). The segment covering 912–938 (PPSPAANPPPPASGPQPPPVTAAPPVP) has biased composition (pro residues).

The protein belongs to the UPF0182 family.

The protein resides in the cell membrane. The chain is UPF0182 protein MT3285 from Mycobacterium tuberculosis (strain CDC 1551 / Oshkosh).